A 233-amino-acid chain; its full sequence is MRFCLLVAFILPGLFLVHAAPTSSTELPEASGEAPETSPLVQNDEQPHQRLTFYNWDYKDLGTTAFEDISFPARQPPAFVNQTEKCPDGWLRFADSCYWIEKELLGFAKAERNCFEKQSTLFVANSIEEWDAIRVQAKEAFFSWIGLVRFTHYEKLEQLPRWQTEGALNPTKINWLIKPYKPLFNGWSSLANCAASYKSPSSLESASYTYFYPCTYMLYSICERNSTIVNALQ.

Positions 1 to 19 (MRFCLLVAFILPGLFLVHA) are cleaved as a signal peptide. Residue Ser31 is glycosylated (O-linked (Xyl...) (chondroitin sulfate) serine). The N-linked (GlcNAc...) asparagine glycan is linked to Asn81. Residues 93–223 (FADSCYWIEK…CTYMLYSICE (131 aa)) form the C-type lectin domain. Disulfide bonds link Cys114–Cys222 and Cys193–Cys214. N-linked (GlcNAc...) asparagine glycosylation is present at Asn225.

In Caenorhabditis elegans, this protein is C-type lectin domain-containing protein 87.